A 363-amino-acid chain; its full sequence is MMAFCALRKALPCRPENPFSSRCFVEILWVSLALVFLLPMPSDACDEPPKFESMRPQFLNTTYRPGDRVEYECRPGFQPMVPALPTFSVCQDDNTWSPLQEACRRKACSNLPDPLNGQVSYPNGDMLFGSKAQFTCNTGFYIIGAETVYCQVSGNVMAWSEPSPLCEKILCKPPGEIPNGKYTNSHKDVFEYNEVVTYSCLSSTGPDEFSLVGESSLFCIGKDEWSSDPPECKVVKCPYPVVPNGEIVSGFGSKFYYKAEVVFKCNAGFTLHGRDTIVCGANSTWEPEMPQCIKDSKPTDPPATPGPSHPGPPSPSDASPPKDAESLDGGIIAAIVVGVLAAIAVIAGGVYFFHHKYNKKRSK.

The first 44 residues, 1-44, serve as a signal peptide directing secretion; it reads MMAFCALRKALPCRPENPFSSRCFVEILWVSLALVFLLPMPSDA. Sushi domains are found at residues 45–105, 106–168, 169–234, and 235–294; these read CDEP…ACRR, KACS…LCEK, ILCK…ECKV, and VKCP…QCIK. Residues 45 to 329 are Extracellular-facing; the sequence is CDEPPKFESM…PPKDAESLDG (285 aa). N-linked (GlcNAc...) asparagine glycosylation occurs at N60. Residue T86 is glycosylated (O-linked (GalNAc...) threonine). Disulfide bonds link C108/C150, C136/C166, C171/C219, C200/C232, C237/C279, and C265/C292. The disordered stretch occupies residues 290–324; that stretch reads PQCIKDSKPTDPPATPGPSHPGPPSPSDASPPKDA. S296 carries an O-linked (GalNAc...) serine glycan. Residues T299 and T304 are each glycosylated (O-linked (GalNAc...) threonine). The segment covering 299-315 has biased composition (pro residues); it reads TDPPATPGPSHPGPPSP. O-linked (GalNAc...) serine glycans are attached at residues S308, S314, S316, and S319. The chain crosses the membrane as a helical span at residues 330–350; sequence GIIAAIVVGVLAAIAVIAGGV. The Cytoplasmic portion of the chain corresponds to 351–363; it reads YFFHHKYNKKRSK.

As to quaternary structure, interacts with C3b. Interacts with C4b. Interacts with moesin/MSN. Post-translationally, N-glycosylated. May be O-glycosylated. As to expression, broadly expressed. Expressed on erythrocytes, leukocytes, granulocytes, platelets, vascular endothelial cells and kidney epithelial cells. Not or weakly expressed in muscle cells and skin (at protein level).

It is found in the cytoplasmic vesicle. Its subcellular location is the secretory vesicle. The protein resides in the acrosome inner membrane. In terms of biological role, acts as a cofactor for complement factor I, a serine protease which protects autologous cells against complement-mediated injury by cleaving C3b and C4b deposited on host tissue. May be involved in the fusion of the spermatozoa with the oocyte during fertilization. May act as a costimulatory factor for T-cells which induces the differentiation of CD4+ into T-regulatory 1 cells. T-regulatory 1 cells suppress immune responses by secreting interleukin-10, and therefore are thought to prevent autoimmunity. The polypeptide is Membrane cofactor protein (CD46) (Sus scrofa (Pig)).